Consider the following 119-residue polypeptide: Large ribosomal subunit protein bL20 (119 aa).

This sequence belongs to the bacterial ribosomal protein bL20 family.

In terms of biological role, binds directly to 23S ribosomal RNA and is necessary for the in vitro assembly process of the 50S ribosomal subunit. It is not involved in the protein synthesizing functions of that subunit. The chain is Large ribosomal subunit protein bL20 from Halorhodospira halophila (strain DSM 244 / SL1) (Ectothiorhodospira halophila (strain DSM 244 / SL1)).